The chain runs to 426 residues: Lipoyl synthase, mitochondrial (426 aa).

A mitochondrion-targeting transit peptide spans 1-29 (MASPAPLQRLQAPLRRSLARAAVLSSRTY). A compositionally biased stretch (polar residues) spans 27–42 (RTYATIPSPSDPGLTQ). The tract at residues 27-61 (RTYATIPSPSDPGLTQSSPSPAASTTPAKKAPRPS) is disordered. The segment covering 43–55 (SSPSPAASTTPAK) has biased composition (low complexity). [4Fe-4S] cluster is bound by residues C140, C145, C151, C171, C175, C178, and S388. Residues 154–377 (GNDKSAATAT…KQRALDMGFL (224 aa)) enclose the Radical SAM core domain.

It belongs to the radical SAM superfamily. Lipoyl synthase family. It depends on [4Fe-4S] cluster as a cofactor.

Its subcellular location is the mitochondrion. It catalyses the reaction [[Fe-S] cluster scaffold protein carrying a second [4Fe-4S](2+) cluster] + N(6)-octanoyl-L-lysyl-[protein] + 2 oxidized [2Fe-2S]-[ferredoxin] + 2 S-adenosyl-L-methionine + 4 H(+) = [[Fe-S] cluster scaffold protein] + N(6)-[(R)-dihydrolipoyl]-L-lysyl-[protein] + 4 Fe(3+) + 2 hydrogen sulfide + 2 5'-deoxyadenosine + 2 L-methionine + 2 reduced [2Fe-2S]-[ferredoxin]. The protein operates within protein modification; protein lipoylation via endogenous pathway; protein N(6)-(lipoyl)lysine from octanoyl-[acyl-carrier-protein]: step 2/2. Functionally, catalyzes the radical-mediated insertion of two sulfur atoms into the C-6 and C-8 positions of the octanoyl moiety bound to the lipoyl domains of lipoate-dependent enzymes, thereby converting the octanoylated domains into lipoylated derivatives. In Podospora anserina (strain S / ATCC MYA-4624 / DSM 980 / FGSC 10383) (Pleurage anserina), this protein is Lipoyl synthase, mitochondrial.